Consider the following 504-residue polypeptide: Histidine ammonia-lyase (504 aa).

Residues 142–144 (ASG) constitute a cross-link (5-imidazolinone (Ala-Gly)). Position 143 is a 2,3-didehydroalanine (Ser) (serine 143).

Belongs to the PAL/histidase family. Contains an active site 4-methylidene-imidazol-5-one (MIO), which is formed autocatalytically by cyclization and dehydration of residues Ala-Ser-Gly.

It is found in the cytoplasm. The enzyme catalyses L-histidine = trans-urocanate + NH4(+). It participates in amino-acid degradation; L-histidine degradation into L-glutamate; N-formimidoyl-L-glutamate from L-histidine: step 1/3. The polypeptide is Histidine ammonia-lyase (Staphylococcus aureus (strain MRSA252)).